The following is a 323-amino-acid chain: Mediator of RNA polymerase II transcription subunit 6 (323 aa).

Disordered regions lie at residues 172 to 213 (FTPS…DAAG) and 271 to 323 (TDRT…KVGS). The span at 189–203 (DASQPGTQSQQSKEN) shows a compositional bias: polar residues. Low complexity predominate over residues 276–285 (AAKPPATAAK). Basic residues predominate over residues 314–323 (MRKKKTKVGS).

This sequence belongs to the Mediator complex subunit 6 family. Component of the Mediator complex.

It localises to the nucleus. Its function is as follows. Component of the Mediator complex, a coactivator involved in the regulated transcription of nearly all RNA polymerase II-dependent genes. Mediator functions as a bridge to convey information from gene-specific regulatory proteins to the basal RNA polymerase II transcription machinery. Mediator is recruited to promoters by direct interactions with regulatory proteins and serves as a scaffold for the assembly of a functional preinitiation complex with RNA polymerase II and the general transcription factors. The sequence is that of Mediator of RNA polymerase II transcription subunit 6 (med6) from Aspergillus niger (strain ATCC MYA-4892 / CBS 513.88 / FGSC A1513).